Reading from the N-terminus, the 54-residue chain is Relaxin (54 aa).

Gln1 bears the Pyrrolidone carboxylic acid mark. 3 cysteine pairs are disulfide-bonded: Cys13/Cys41, Cys25/Cys54, and Cys40/Cys45.

The protein belongs to the insulin family. As to quaternary structure, heterodimer of a B chain and an A chain linked by two disulfide bonds.

It is found in the secreted. Its function is as follows. The function of relaxin in an oviparous species is not yet known. This is Relaxin from Squalus acanthias (Spiny dogfish).